Reading from the N-terminus, the 293-residue chain is HTH-type transcriptional regulator HdfR (293 aa).

Residues 1–58 (MDTELLKTFLEVSRTRHFGRAAESLYLTQSAVSFRIRQLENQLGANLFTRHRNNIRLT) form the HTH lysR-type domain. The segment at residues 18 to 37 (FGRAAESLYLTQSAVSFRIR) is a DNA-binding region (H-T-H motif).

The protein belongs to the LysR transcriptional regulatory family.

Its function is as follows. Negatively regulates the transcription of the flagellar master operon flhDC by binding to the upstream region of the operon. This is HTH-type transcriptional regulator HdfR from Yersinia enterocolitica serotype O:8 / biotype 1B (strain NCTC 13174 / 8081).